The primary structure comprises 329 residues: GMP reductase (329 aa).

Cysteine 178 acts as the Thioimidate intermediate in catalysis. 207–230 provides a ligand contact to NADP(+); the sequence is IIADGGIRNNGDIAKSIRFGATMC.

The protein belongs to the IMPDH/GMPR family. GuaC type 2 subfamily.

It carries out the reaction IMP + NH4(+) + NADP(+) = GMP + NADPH + 2 H(+). Functionally, catalyzes the irreversible NADPH-dependent deamination of GMP to IMP. It functions in the conversion of nucleobase, nucleoside and nucleotide derivatives of G to A nucleotides, and in maintaining the intracellular balance of A and G nucleotides. This chain is GMP reductase, found in Lacticaseibacillus paracasei (strain ATCC 334 / BCRC 17002 / CCUG 31169 / CIP 107868 / KCTC 3260 / NRRL B-441) (Lactobacillus paracasei).